A 484-amino-acid chain; its full sequence is Trigger factor (484 aa).

Residues 165 to 244 (GDFVQIDLTA…VQSVKERELP (80 aa)) form the PPIase FKBP-type domain. The segment at 429–484 (DAVSEEPADADAEAVVADAPAEEAAEAPAAEEAPAEKPKKKAPAKKKASEKAADSE) is disordered. Over residues 430–440 (AVSEEPADADA) the composition is skewed to acidic residues. A compositionally biased stretch (basic and acidic residues) spans 475–484 (KASEKAADSE).

This sequence belongs to the FKBP-type PPIase family. Tig subfamily.

The protein resides in the cytoplasm. The catalysed reaction is [protein]-peptidylproline (omega=180) = [protein]-peptidylproline (omega=0). Involved in protein export. Acts as a chaperone by maintaining the newly synthesized protein in an open conformation. Functions as a peptidyl-prolyl cis-trans isomerase. This is Trigger factor from Clavibacter michiganensis subsp. michiganensis (strain NCPPB 382).